A 340-amino-acid polypeptide reads, in one-letter code: GTP 3',8-cyclase (340 aa).

One can recognise a Radical SAM core domain in the interval Arg20–Lys246. Arg29 serves as a coordination point for GTP. [4Fe-4S] cluster contacts are provided by Cys36 and Cys40. Tyr42 is a binding site for S-adenosyl-L-methionine. A [4Fe-4S] cluster-binding site is contributed by Cys43. Arg79 serves as a coordination point for GTP. Gly83 contributes to the S-adenosyl-L-methionine binding site. A GTP-binding site is contributed by Thr110. Position 134 (Ser134) interacts with S-adenosyl-L-methionine. Lys171 is a binding site for GTP. S-adenosyl-L-methionine is bound at residue Met205. Residues Cys268 and Cys271 each coordinate [4Fe-4S] cluster. Arg273 to Arg275 lines the GTP pocket. Cys285 is a [4Fe-4S] cluster binding site.

Belongs to the radical SAM superfamily. MoaA family. As to quaternary structure, monomer and homodimer. It depends on [4Fe-4S] cluster as a cofactor.

It catalyses the reaction GTP + AH2 + S-adenosyl-L-methionine = (8S)-3',8-cyclo-7,8-dihydroguanosine 5'-triphosphate + 5'-deoxyadenosine + L-methionine + A + H(+). Its pathway is cofactor biosynthesis; molybdopterin biosynthesis. Its function is as follows. Catalyzes the cyclization of GTP to (8S)-3',8-cyclo-7,8-dihydroguanosine 5'-triphosphate. In Haemophilus ducreyi (strain 35000HP / ATCC 700724), this protein is GTP 3',8-cyclase.